Consider the following 122-residue polypeptide: Large ribosomal subunit protein uL14 (122 aa).

The protein belongs to the universal ribosomal protein uL14 family. As to quaternary structure, part of the 50S ribosomal subunit. Forms a cluster with proteins L3 and L19. In the 70S ribosome, L14 and L19 interact and together make contacts with the 16S rRNA in bridges B5 and B8.

In terms of biological role, binds to 23S rRNA. Forms part of two intersubunit bridges in the 70S ribosome. This Agathobacter rectalis (strain ATCC 33656 / DSM 3377 / JCM 17463 / KCTC 5835 / VPI 0990) (Eubacterium rectale) protein is Large ribosomal subunit protein uL14.